A 102-amino-acid chain; its full sequence is Small ribosomal subunit protein bS18 (102 aa).

This sequence belongs to the bacterial ribosomal protein bS18 family. In terms of assembly, part of the 30S ribosomal subunit. Forms a tight heterodimer with protein bS6.

In terms of biological role, binds as a heterodimer with protein bS6 to the central domain of the 16S rRNA, where it helps stabilize the platform of the 30S subunit. In Orientia tsutsugamushi (strain Boryong) (Rickettsia tsutsugamushi), this protein is Small ribosomal subunit protein bS18.